The chain runs to 308 residues: Ribosomal RNA large subunit methyltransferase F (308 aa).

Belongs to the methyltransferase superfamily. METTL16/RlmF family.

Its subcellular location is the cytoplasm. It catalyses the reaction adenosine(1618) in 23S rRNA + S-adenosyl-L-methionine = N(6)-methyladenosine(1618) in 23S rRNA + S-adenosyl-L-homocysteine + H(+). Specifically methylates the adenine in position 1618 of 23S rRNA. This chain is Ribosomal RNA large subunit methyltransferase F, found in Escherichia fergusonii (strain ATCC 35469 / DSM 13698 / CCUG 18766 / IAM 14443 / JCM 21226 / LMG 7866 / NBRC 102419 / NCTC 12128 / CDC 0568-73).